A 245-amino-acid chain; its full sequence is MALALCLQVLCSLCGWLSLYISFCHLNKHRSYEWSCRLVTFTHGVLSIGLSAYIGFIDGPWPFTHPGSPNTPLQVHVLCLTLGYFIFDLGWCVYFQSEGALMLAHHTLSILGIIMALVLGESGTEVNAVLFGSELTNPLLQMRWFLRETGHYHSFTGDVVDFLFVALFTGVRIGVGACLLFCEMVSPTPKWFVKAGGVAMYAVSWCFMFSIWRFAWRKSIKKYHAWRSRRSEERQLKHNGHLKIH.

6 helical membrane-spanning segments follow: residues 1–21, 38–58, 75–95, 99–119, 162–182, and 191–211; these read MALA…SLYI, LVTF…GFID, VHVL…CVYF, GALM…ALVL, FLFV…LLFC, and WFVK…MFSI. Positions 29–204 constitute a TLC domain; sequence HRSYEWSCRL…AGGVAMYAVS (176 aa).

This sequence belongs to the TLCD5 family.

It localises to the membrane. In Homo sapiens (Human), this protein is TLC domain-containing protein 5.